The chain runs to 409 residues: Glucose-1-phosphate adenylyltransferase (409 aa).

Alpha-D-glucose 1-phosphate is bound by residues Gly168, 183-184 (EK), and Ser201.

The protein belongs to the bacterial/plant glucose-1-phosphate adenylyltransferase family. Homotetramer.

It catalyses the reaction alpha-D-glucose 1-phosphate + ATP + H(+) = ADP-alpha-D-glucose + diphosphate. It participates in glycan biosynthesis; glycogen biosynthesis. Functionally, involved in the biosynthesis of ADP-glucose, a building block required for the elongation reactions to produce glycogen. Catalyzes the reaction between ATP and alpha-D-glucose 1-phosphate (G1P) to produce pyrophosphate and ADP-Glc. In Corynebacterium efficiens (strain DSM 44549 / YS-314 / AJ 12310 / JCM 11189 / NBRC 100395), this protein is Glucose-1-phosphate adenylyltransferase.